The following is a 412-amino-acid chain: Serine hydroxymethyltransferase (412 aa).

Residues Leu-114 and 118–120 each bind (6S)-5,6,7,8-tetrahydrofolate; that span reads GHL. Lys-223 carries the post-translational modification N6-(pyridoxal phosphate)lysine.

This sequence belongs to the SHMT family. As to quaternary structure, homodimer. It depends on pyridoxal 5'-phosphate as a cofactor.

Its subcellular location is the cytoplasm. The catalysed reaction is (6R)-5,10-methylene-5,6,7,8-tetrahydrofolate + glycine + H2O = (6S)-5,6,7,8-tetrahydrofolate + L-serine. It participates in one-carbon metabolism; tetrahydrofolate interconversion. Its pathway is amino-acid biosynthesis; glycine biosynthesis; glycine from L-serine: step 1/1. Its function is as follows. Catalyzes the reversible interconversion of serine and glycine with tetrahydrofolate (THF) serving as the one-carbon carrier. This reaction serves as the major source of one-carbon groups required for the biosynthesis of purines, thymidylate, methionine, and other important biomolecules. Also exhibits THF-independent aldolase activity toward beta-hydroxyamino acids, producing glycine and aldehydes, via a retro-aldol mechanism. The polypeptide is Serine hydroxymethyltransferase (Mesoplasma florum (strain ATCC 33453 / NBRC 100688 / NCTC 11704 / L1) (Acholeplasma florum)).